The chain runs to 301 residues: MNIIFMGTPAYARTILDALVRAGIGVAGVFTQPDKPVGRKQILTPSEVKIYAQQNLPHAKIFQPKTLKEGTVAAEILALKPDFIVVAAYGKILPKSVLDIAPCINLHASILPKYRGASPIQAALLNGEKNTGVTAMLMDEGLDTGDMLGFTHVSCEGKRSAEMFEILGELAGELAVKTLFDFKNLTPQKQDDALATHCKKIQKSDGLVNLSEDAEQIYNKFRAFHEWPGVFLESGLKFLELNLAEGSGAAGEILRIEKDGFVVACGTGALKILALQEAGKKALDAKAYINGKRLVAGNKIS.

109–112 is a binding site for (6S)-5,6,7,8-tetrahydrofolate; sequence SILP.

The protein belongs to the Fmt family.

It carries out the reaction L-methionyl-tRNA(fMet) + (6R)-10-formyltetrahydrofolate = N-formyl-L-methionyl-tRNA(fMet) + (6S)-5,6,7,8-tetrahydrofolate + H(+). Its function is as follows. Attaches a formyl group to the free amino group of methionyl-tRNA(fMet). The formyl group appears to play a dual role in the initiator identity of N-formylmethionyl-tRNA by promoting its recognition by IF2 and preventing the misappropriation of this tRNA by the elongation apparatus. The polypeptide is Methionyl-tRNA formyltransferase (Campylobacter curvus (strain 525.92)).